The chain runs to 108 residues: MSRAKGAKAEEIGALFLQDLGYKIIDRNFYAPFGEIDIIAQKGGVLHFVEVKSGANFEPIYNITPLKLSRIIKSAQYYLKQKKITPPFCVDALILRGGEVEFIENITL.

The protein belongs to the UPF0102 family.

In Wolinella succinogenes (strain ATCC 29543 / DSM 1740 / CCUG 13145 / JCM 31913 / LMG 7466 / NCTC 11488 / FDC 602W) (Vibrio succinogenes), this protein is UPF0102 protein WS0451.